A 413-amino-acid chain; its full sequence is CinA-like protein (413 aa).

This sequence belongs to the CinA family.

This Geobacter sulfurreducens (strain ATCC 51573 / DSM 12127 / PCA) protein is CinA-like protein.